A 375-amino-acid chain; its full sequence is Actin-binding Rho-activating protein (375 aa).

Basic and acidic residues-rich tracts occupy residues 1–11 (MAPGEREREAG) and 79–99 (KPDR…SHIK). Disordered stretches follow at residues 1 to 20 (MAPG…LRKV) and 38 to 99 (NENS…SHIK). Residues serine 150 and serine 182 each carry the phosphoserine modification. A compositionally biased stretch (basic and acidic residues) spans 173–182 (QEEPTWKSDS). The tract at residues 173–204 (QEEPTWKSDSVDTEDSGYGGDMEERPEQDAAP) is disordered. Actin-binding regions lie at residues 193–293 (DMEE…AERA) and 294–375 (KRAE…TLLE). 2 interaction with actin regions span residues 234–279 (SQVD…GDEG) and 346–375 (MRAR…TLLE).

In terms of assembly, binds F-actin and ABLIM1, ABLIM2 and ABLIM3. Interaction with ABLIM2 and ABLIM3 enhances activity. In terms of tissue distribution, expressed specifically in heart and skeletal muscle.

It is found in the cytoplasm. It localises to the myofibril. The protein resides in the sarcomere. Its subcellular location is the cytoskeleton. Functionally, acts as an activator of serum response factor (SRF)-dependent transcription possibly by inducing nuclear translocation of MKL1 or MKL2 and through a mechanism requiring Rho-actin signaling. The polypeptide is Actin-binding Rho-activating protein (Mus musculus (Mouse)).